Here is a 305-residue protein sequence, read N- to C-terminus: Glycerol-3-phosphate dehydrogenase [NAD(P)+] (305 aa).

Residues Trp11, Arg31, and Lys79 each contribute to the NADPH site. Sn-glycerol 3-phosphate-binding residues include Lys79 and Gly107. Residue Ala111 participates in NADPH binding. The sn-glycerol 3-phosphate site is built by Lys162, Asp215, Ser225, Arg226, and Asn227. Catalysis depends on Lys162, which acts as the Proton acceptor. Arg226 lines the NADPH pocket. Glu252 serves as a coordination point for NADPH.

Belongs to the NAD-dependent glycerol-3-phosphate dehydrogenase family.

It localises to the cytoplasm. It catalyses the reaction sn-glycerol 3-phosphate + NAD(+) = dihydroxyacetone phosphate + NADH + H(+). The enzyme catalyses sn-glycerol 3-phosphate + NADP(+) = dihydroxyacetone phosphate + NADPH + H(+). It participates in membrane lipid metabolism; glycerophospholipid metabolism. Functionally, catalyzes the reduction of the glycolytic intermediate dihydroxyacetone phosphate (DHAP) to sn-glycerol 3-phosphate (G3P), the key precursor for phospholipid synthesis. This Gloeobacter violaceus (strain ATCC 29082 / PCC 7421) protein is Glycerol-3-phosphate dehydrogenase [NAD(P)+].